A 235-amino-acid polypeptide reads, in one-letter code: Protein Thf1 (235 aa).

A coiled-coil region spans residues 179 to 228; the sequence is LNLSSDKLQKDLDLYRSNVDKMGQLLAVIEDALEAERKKREKAKQEVATT.

The protein belongs to the THF1 family.

In terms of biological role, may be involved in photosynthetic membrane biogenesis. This chain is Protein Thf1, found in Rippkaea orientalis (strain PCC 8801 / RF-1) (Cyanothece sp. (strain PCC 8801)).